Reading from the N-terminus, the 201-residue chain is Probable molybdenum cofactor guanylyltransferase (201 aa).

Residues 16–18 (LAG), Lys28, Asp75, and Asp107 contribute to the GTP site. Asp107 is a Mg(2+) binding site.

Belongs to the MobA family. It depends on Mg(2+) as a cofactor.

It localises to the cytoplasm. It catalyses the reaction Mo-molybdopterin + GTP + H(+) = Mo-molybdopterin guanine dinucleotide + diphosphate. In terms of biological role, transfers a GMP moiety from GTP to Mo-molybdopterin (Mo-MPT) cofactor (Moco or molybdenum cofactor) to form Mo-molybdopterin guanine dinucleotide (Mo-MGD) cofactor. The polypeptide is Probable molybdenum cofactor guanylyltransferase (Mycobacterium ulcerans (strain Agy99)).